Reading from the N-terminus, the 257-residue chain is Zinc uptake system ATP-binding protein ZurA (257 aa).

The 237-residue stretch at 5–241 (IEVNNVSYHY…ADRELEILAE (237 aa)) folds into the ABC transporter domain. 37 to 44 (GPNGSGKS) contributes to the ATP binding site.

The protein belongs to the ABC transporter superfamily.

Its function is as follows. Involved in a zinc uptake transport system. This Listeria monocytogenes serovar 1/2a (strain ATCC BAA-679 / EGD-e) protein is Zinc uptake system ATP-binding protein ZurA (zurA).